The following is a 535-amino-acid chain: Arylsulfatase K (535 aa).

The signal sequence occupies residues 1 to 21; the sequence is MGSGGPLLLLRGLLLVGAAYC. Ca(2+)-binding residues include D41 and C81. The active-site Nucleophile is the C81. C81 is modified (3-oxoalanine (Cys)). K129 is a binding site for substrate. N194 carries an N-linked (GlcNAc...) asparagine glycan. Residue H252 coordinates substrate. An N-linked (GlcNAc...) asparagine glycan is attached at N263. Ca(2+) contacts are provided by D314 and H315. N-linked (GlcNAc...) asparagine glycosylation is found at N376, N414, and N499.

This sequence belongs to the sulfatase family. Ca(2+) serves as cofactor. In terms of processing, the conversion to 3-oxoalanine (also known as C-formylglycine, FGly), of a serine or cysteine residue in prokaryotes and of a cysteine residue in eukaryotes, is critical for catalytic activity.

The protein resides in the secreted. It is found in the lysosome. The catalysed reaction is an aryl sulfate + H2O = a phenol + sulfate + H(+). It carries out the reaction Hydrolysis of the 2-sulfate groups of the 2-O-sulfo-D-glucuronate residues of chondroitin sulfate, heparin and heparitin sulfate.. Its function is as follows. Catalyzes the hydrolysis of pseudosubstrates such as p-nitrocatechol sulfate and p-nitrophenyl sulfate. Catalyzes the hydrolysis of the 2-sulfate groups of the 2-O-sulfo-D-glucuronate residues of chondroitin sulfate, heparin and heparitin sulfate. Acts selectively on 2-sulfoglucuronate and lacks activity against 2-sulfoiduronate. This is Arylsulfatase K (ARSK) from Gallus gallus (Chicken).